A 925-amino-acid polypeptide reads, in one-letter code: Leucine--tRNA ligase (925 aa).

The short motif at 40-51 is the 'HIGH' region element; sequence PYPSGAGLHVGH. The 'KMSKS' region signature appears at 700–704; that stretch reads KMSKS. Residue Lys-703 participates in ATP binding.

The protein belongs to the class-I aminoacyl-tRNA synthetase family.

The protein localises to the cytoplasm. It catalyses the reaction tRNA(Leu) + L-leucine + ATP = L-leucyl-tRNA(Leu) + AMP + diphosphate. This is Leucine--tRNA ligase from Porphyromonas gingivalis (strain ATCC 33277 / DSM 20709 / CIP 103683 / JCM 12257 / NCTC 11834 / 2561).